Here is a 444-residue protein sequence, read N- to C-terminus: Deoxyguanosinetriphosphate triphosphohydrolase-like protein (444 aa).

Residues 1-26 form a disordered region; that stretch reads MIASPWHERRLNEDKKRRNDHRSPFQ. In terms of domain architecture, HD spans 59–250; the sequence is RLTHSLEVSQ…MELADDIAYA (192 aa).

It belongs to the dGTPase family. Type 2 subfamily.

The sequence is that of Deoxyguanosinetriphosphate triphosphohydrolase-like protein from Shewanella woodyi (strain ATCC 51908 / MS32).